The following is a 694-amino-acid chain: Elongation factor G (694 aa).

Positions 9 to 288 (SKIRNIGIMA…VIVKWLPSPK (280 aa)) constitute a tr-type G domain. GTP contacts are provided by residues 18–25 (AHIDAGKT), 82–86 (DTPGH), and 136–139 (NKMD).

The protein belongs to the TRAFAC class translation factor GTPase superfamily. Classic translation factor GTPase family. EF-G/EF-2 subfamily.

The protein resides in the cytoplasm. Its function is as follows. Catalyzes the GTP-dependent ribosomal translocation step during translation elongation. During this step, the ribosome changes from the pre-translocational (PRE) to the post-translocational (POST) state as the newly formed A-site-bound peptidyl-tRNA and P-site-bound deacylated tRNA move to the P and E sites, respectively. Catalyzes the coordinated movement of the two tRNA molecules, the mRNA and conformational changes in the ribosome. This is Elongation factor G from Chlamydia felis (strain Fe/C-56) (Chlamydophila felis).